We begin with the raw amino-acid sequence, 372 residues long: Protein-glutamate methylesterase/protein-glutamine glutaminase 1 (372 aa).

Residues 4–121 form the Response regulatory domain; the sequence is KVLVVDDSSF…ATNKDDAILL (118 aa). Asp55 carries the 4-aspartylphosphate modification. The disordered stretch occupies residues 138–174; that stretch reads VVRPTTPTPPPRSSASSVLGGVSTHTQPAPVRSSHAA. A CheB-type methylesterase domain is found at 179–372; sequence SGKQYKLLLI…ESILKESARG (194 aa). Residues Ser191, His218, and Asp314 contribute to the active site.

Belongs to the CheB family. In terms of processing, phosphorylated by CheA. Phosphorylation of the N-terminal regulatory domain activates the methylesterase activity.

It is found in the cytoplasm. It catalyses the reaction [protein]-L-glutamate 5-O-methyl ester + H2O = L-glutamyl-[protein] + methanol + H(+). The catalysed reaction is L-glutaminyl-[protein] + H2O = L-glutamyl-[protein] + NH4(+). In terms of biological role, involved in chemotaxis. Part of a chemotaxis signal transduction system that modulates chemotaxis in response to various stimuli. Catalyzes the demethylation of specific methylglutamate residues introduced into the chemoreceptors (methyl-accepting chemotaxis proteins or MCP) by CheR. Also mediates the irreversible deamidation of specific glutamine residues to glutamic acid. The chain is Protein-glutamate methylesterase/protein-glutamine glutaminase 1 from Shewanella sp. (strain MR-4).